A 526-amino-acid polypeptide reads, in one-letter code: Delayed-rectifier potassium channel regulatory subunit KCNS1 (526 aa).

The Cytoplasmic portion of the chain corresponds to 1–217 (MLMLLVRGTH…LTMENPGYSL (217 aa)). The helical transmembrane segment at 218–239 (PSKLFSCVSISVVLASIAAMCI) threads the bilayer. The Extracellular segment spans residues 240 to 270 (HSLPEYQAREAAAAVAAVAAGRSPEGVRDDP). The chain crosses the membrane as a helical span at residues 271 to 293 (VLRRLEYFCIAWFSFEVSSRLLL). Residues 294-304 (APSTRNFFCHP) lie on the Cytoplasmic side of the membrane. Residues 305–322 (LNLIDIVSVLPFYLTLLA) form a helical membrane-spanning segment. Residues 323–337 (GVALGDQGGKEFGHL) lie on the Extracellular side of the membrane. The chain crosses the membrane as a helical; Voltage-sensor span at residues 338-358 (GKVVQVFRLMRIFRVLKLARH). The Cytoplasmic portion of the chain corresponds to 359–373 (STGLRSLGATLKHSY). A helical transmembrane segment spans residues 374–395 (REVGILLLYLAVGVSVFSGVAY). Over 396–408 (TAEKEEDVGFNTI) the chain is Extracellular. Residues 409-420 (PACWWWGTVSMT) constitute an intramembrane region (helical). Residues 421–426 (TVGYGD) carry the Selectivity filter motif. An intramembrane segment occupies 421 to 428 (TVGYGDVV). Over 429–435 (PVTVAGK) the chain is Extracellular. A helical membrane pass occupies residues 436–464 (LAASGCILGGILVVALPITIIFNKFSHFY). Topologically, residues 465 to 526 (RRQKALEAAV…PSEPPHPQMY (62 aa)) are cytoplasmic. The segment at 491-526 (GVSEASLETSRETSQEGRSADLESQAPSEPPHPQMY) is disordered. The segment covering 499–511 (TSRETSQEGRSAD) has biased composition (basic and acidic residues).

It belongs to the potassium channel family. S (TC 1.A.1.2) subfamily. Kv9.1/KCNS1 sub-subfamily. In terms of assembly, heterotetramer with KCNB1. Heterotetramer with KCNB2. Does not form homomultimers.

It localises to the cell membrane. In terms of biological role, potassium channel regulatory subunit that modulate the delayed rectifier voltage-gated potassium channel activity of KCNB1 and KCNB2 by altering their kinetics, expression levels, and shifting the half-inactivation potential to more polarized values. While it does not form functional channels on its own, it can form functional heterotetrameric channels with KCNB1 and KCNB2. Each regulatory subunit has unique regulatory properties that can lead to extensive inhibition, significant changes in kinetics, and/or substantial shifts in the voltage dependencies of the inactivation process. This chain is Delayed-rectifier potassium channel regulatory subunit KCNS1, found in Pan troglodytes (Chimpanzee).